Reading from the N-terminus, the 937-residue chain is Isoleucine--tRNA ligase (937 aa).

A 'HIGH' region motif is present at residues 58–68; the sequence is PYANGSIHIGH. Glu-561 is an L-isoleucyl-5'-AMP binding site. Positions 602-606 match the 'KMSKS' region motif; the sequence is KMSKS. ATP is bound at residue Lys-605. Cys-900, Cys-903, Cys-920, and Cys-923 together coordinate Zn(2+).

This sequence belongs to the class-I aminoacyl-tRNA synthetase family. IleS type 1 subfamily. In terms of assembly, monomer. It depends on Zn(2+) as a cofactor.

The protein localises to the cytoplasm. The enzyme catalyses tRNA(Ile) + L-isoleucine + ATP = L-isoleucyl-tRNA(Ile) + AMP + diphosphate. Catalyzes the attachment of isoleucine to tRNA(Ile). As IleRS can inadvertently accommodate and process structurally similar amino acids such as valine, to avoid such errors it has two additional distinct tRNA(Ile)-dependent editing activities. One activity is designated as 'pretransfer' editing and involves the hydrolysis of activated Val-AMP. The other activity is designated 'posttransfer' editing and involves deacylation of mischarged Val-tRNA(Ile). This Photorhabdus laumondii subsp. laumondii (strain DSM 15139 / CIP 105565 / TT01) (Photorhabdus luminescens subsp. laumondii) protein is Isoleucine--tRNA ligase.